The following is a 248-amino-acid chain: tRNA (guanine-N(1)-)-methyltransferase (248 aa).

S-adenosyl-L-methionine-binding positions include Gly-116 and 136–141 (VGDYVL).

It belongs to the RNA methyltransferase TrmD family. In terms of assembly, homodimer.

The protein resides in the cytoplasm. It catalyses the reaction guanosine(37) in tRNA + S-adenosyl-L-methionine = N(1)-methylguanosine(37) in tRNA + S-adenosyl-L-homocysteine + H(+). Specifically methylates guanosine-37 in various tRNAs. The protein is tRNA (guanine-N(1)-)-methyltransferase of Psychromonas ingrahamii (strain DSM 17664 / CCUG 51855 / 37).